A 471-amino-acid chain; its full sequence is MQAASAFATCLLASVGGNSSAVAFPNQANYSTLVAPYNFDLLTTPSAIVWPQDTQQVAAAVKCAVDSDIKVQPKSGGHNYGNYGSTTGELSVNLDNLQHFSMDETSWTARLGPGNRLGRVTELMYNNGGRHVPHGTTFTVGLGGHATVGGAGAASRMHGLLLDYVEEVEVVLANSSIVRASKSHNEDLFFAVRGAASSVGIVTDFSIRTEPVPVSSVTYSYIWEGTDPAARAEVFLTWQSLLAGGSLPQHMAYDLVATANSMILGGAYFGSQEDFEAFNLSSHFKVAPDVAHIKTYTNFFDFSAAASAQTKAAGIASPSHFYAKSLVFNQQTLIPDDAAEEVFKYLATTKNGTDLYAVTFAALGGAVRDVSASETAFYHRDASYFMFSFGRTSGDLTDTTVQFLDGLSEVLTSGQPDAYYGQYVGNVDPRQSTDKALTGYYGKNLHRLQQIKSAVDPNDVFHNQQSIPPLS.

Residues 1–23 form the signal peptide; that stretch reads MQAASAFATCLLASVGGNSSAVA. N18, N29, N174, N279, and N351 each carry an N-linked (GlcNAc...) asparagine glycan. One can recognise an FAD-binding PCMH-type domain in the interval 41 to 212; it reads LLTTPSAIVW…TDFSIRTEPV (172 aa).

This sequence belongs to the oxygen-dependent FAD-linked oxidoreductase family. It depends on FAD as a cofactor.

It participates in secondary metabolite biosynthesis. Its function is as follows. FAD-linked oxidoreductase; part of the gene cluster that mediates the biosynthesis of sorbicillinoids, a diverse group of yellow secondary metabolites that restrict growth of competing pathogenic fungi but not of bacteria. Sorbicillinoids biosynthesis requires the action of two PKSs. SorA iteratively combines three acetyl units and the growing chain is modified by the ketoacyl reductase subunit, and optional by the enoyl reductase subunit in the second cycle. The polyketide is then handed over to the PKS SorB, which adds three more acetyl units, and two methyl groups. SorB releases an aldehyde, which undergoes spontaneous cyclization resulting in the formation of sorbicillin or 2',3'-dihydrosorbicillin. The monooxygenase sorC oxidizes sorbicillin and 2',3'-dihydrosorbicillin to 2',3'-dihydrosorbicillinol and sorbicillinol, respectively. The oxidoreductase sorD further converts sorbicillinol into oxosorbicillinol. Sorbicillinol is the building block for the other sorbicillinoids such as disorbicillinol, bisvertinolon, and dihydrobisvertinolone. The polypeptide is FAD-linked oxidoreductase sorD (Penicillium rubens (strain ATCC 28089 / DSM 1075 / NRRL 1951 / Wisconsin 54-1255) (Penicillium chrysogenum)).